Consider the following 290-residue polypeptide: 2-dehydropantoate 2-reductase (290 aa).

Residues 8 to 13 (GPGAVG), Asn98, and Ala124 contribute to the NADP(+) site. Asn98 contacts substrate. Lys175 acts as the Proton donor in catalysis. Asn179 and Ser244 together coordinate substrate. Residue Glu256 coordinates NADP(+).

It belongs to the ketopantoate reductase family.

Its subcellular location is the cytoplasm. It catalyses the reaction (R)-pantoate + NADP(+) = 2-dehydropantoate + NADPH + H(+). It participates in cofactor biosynthesis; (R)-pantothenate biosynthesis; (R)-pantoate from 3-methyl-2-oxobutanoate: step 2/2. In terms of biological role, catalyzes the NADPH-dependent reduction of ketopantoate into pantoic acid. The sequence is that of 2-dehydropantoate 2-reductase from Caulobacter vibrioides (strain ATCC 19089 / CIP 103742 / CB 15) (Caulobacter crescentus).